The sequence spans 482 residues: ADP-ribosylation factor GTPase-activating protein effector protein 1 (482 aa).

The tract at residues 116 to 156 (QHKSTHSHHINHQTHPIHSSSSNSNSNNRIPTKTDSSKQHT) is disordered. Over residues 118–127 (KSTHSHHINH) the composition is skewed to basic residues. A compositionally biased stretch (low complexity) spans 134-143 (SSSSNSNSNN). In terms of domain architecture, Arf-GAP spans 170–297 (DELLSIVRKI…FVIDSNQGRE (128 aa)). A C4-type zinc finger spans residues 186 to 210 (CCDCGSTATVEWVSINLLCILCIKC).

The protein localises to the cytoplasm. In terms of biological role, GTPase-activating protein (GAP) for the ADP ribosylation factors ARF1 and ARF2. May be involved in the endocytic pathway. In Saccharomyces cerevisiae (strain ATCC 204508 / S288c) (Baker's yeast), this protein is ADP-ribosylation factor GTPase-activating protein effector protein 1 (AGE1).